The following is a 217-amino-acid chain: uncharacterized protein (217 aa).

To M.tuberculosis Rv2926c.

This is an uncharacterized protein from Mycobacterium leprae (strain TN).